The primary structure comprises 1132 residues: Protein CROWDED NUCLEI 1 (1132 aa).

The segment at 1–31 (MSTPLKVWQRWSTPTKATNPDSNGSSHGTGL) is disordered. A compositionally biased stretch (polar residues) spans 10–28 (RWSTPTKATNPDSNGSSHG). Positions 73 to 714 (LLIEKKEWSS…KKLKEQREQF (642 aa)) form a coiled coil. Short sequence motifs (nuclear localization signal) lie at residues 379 to 386 (EKREAEWK) and 693 to 700 (IRKDVDDL). A phosphoserine mark is found at serine 774 and serine 803. Over residues 849 to 859 (AESETGTKEVE) the composition is skewed to basic and acidic residues. 4 disordered regions span residues 849–871 (AESE…DQSD), 883–909 (SLSN…TRSV), 924–1039 (INLY…VQQE), and 1061–1132 (GVST…FLTT). A compositionally biased stretch (polar residues) spans 861–871 (TNVNSDGDQSD). 2 positions are modified to phosphoserine: serine 865 and serine 883. Positions 895-907 (MKGKGKARTRRTR) are enriched in basic residues. Residue serine 908 is modified to Phosphoserine. Phosphoserine is present on residues serine 1093, serine 1105, and serine 1112. Over residues 1095 to 1105 (DVNKTPLRADS) the composition is skewed to basic and acidic residues.

Belongs to the CRWN family. Core component of the LINC complex which is composed of inner nuclear membrane SUN domain-containing proteins coupled to outer nuclear membrane WIP and WIT proteins. The LINC complex also involves nucleoskeletal proteins CRWN/LINC and possibly KAKU4 and the cytoskeletal myosin KAKU1. Interacts with SUN1 and SUN2. Binds to KAKU4. In terms of tissue distribution, expressed at low levels in roots, leaves, flowers and flower stalks.

Its subcellular location is the nucleus membrane. The protein localises to the nucleus. It is found in the nucleoplasm. It localises to the nucleus lamina. Functionally, component of SUN-protein-containing multivariate complexes also called LINC complexes which link the nucleoskeleton and cytoskeleton by providing versatile outer nuclear membrane attachment sites for cytoskeletal filaments. Required for nucleus structure organization (e.g. size and shape). This is Protein CROWDED NUCLEI 1 from Arabidopsis thaliana (Mouse-ear cress).